Reading from the N-terminus, the 320-residue chain is Ferrochelatase (320 aa).

Residues histidine 194 and glutamate 275 each contribute to the Fe cation site.

This sequence belongs to the ferrochelatase family. Monomer.

Its subcellular location is the cytoplasm. It carries out the reaction heme b + 2 H(+) = protoporphyrin IX + Fe(2+). It participates in porphyrin-containing compound metabolism; protoheme biosynthesis; protoheme from protoporphyrin-IX: step 1/1. Functionally, catalyzes the ferrous insertion into protoporphyrin IX. The sequence is that of Ferrochelatase from Escherichia coli O157:H7 (strain EC4115 / EHEC).